The following is a 439-amino-acid chain: Glutamate--tRNA ligase 2 (439 aa).

A 'HIGH' region motif is present at residues Pro-6 to Asn-16. A 'KMSKS' region motif is present at residues Lys-232–Arg-236. ATP is bound at residue Lys-235.

Belongs to the class-I aminoacyl-tRNA synthetase family. Glutamate--tRNA ligase type 1 subfamily. Monomer.

It localises to the cytoplasm. The enzyme catalyses tRNA(Glu) + L-glutamate + ATP = L-glutamyl-tRNA(Glu) + AMP + diphosphate. Its function is as follows. Catalyzes the attachment of glutamate to tRNA(Glu) in a two-step reaction: glutamate is first activated by ATP to form Glu-AMP and then transferred to the acceptor end of tRNA(Glu). The protein is Glutamate--tRNA ligase 2 of Helicobacter pylori (strain HPAG1).